Here is a 302-residue protein sequence, read N- to C-terminus: Recombination-associated protein RdgC (302 aa).

Belongs to the RdgC family.

Its subcellular location is the cytoplasm. It is found in the nucleoid. May be involved in recombination. The protein is Recombination-associated protein RdgC of Tolumonas auensis (strain DSM 9187 / NBRC 110442 / TA 4).